The chain runs to 145 residues: 3-dehydroquinate dehydratase (145 aa).

Tyr23 serves as the catalytic Proton acceptor. Substrate-binding residues include Asn74, His80, and Asp87. Residue His100 is the Proton donor of the active site. Residues 101–102 and Arg111 each bind substrate; that span reads LS.

The protein belongs to the type-II 3-dehydroquinase family. Homododecamer.

The enzyme catalyses 3-dehydroquinate = 3-dehydroshikimate + H2O. It participates in metabolic intermediate biosynthesis; chorismate biosynthesis; chorismate from D-erythrose 4-phosphate and phosphoenolpyruvate: step 3/7. In terms of biological role, catalyzes a trans-dehydration via an enolate intermediate. The protein is 3-dehydroquinate dehydratase of Halalkalibacterium halodurans (strain ATCC BAA-125 / DSM 18197 / FERM 7344 / JCM 9153 / C-125) (Bacillus halodurans).